The following is a 310-amino-acid chain: Protein YIP5 (310 aa).

Residues 1-84 (MPSNNSSFLD…VIGQNDNDGL (84 aa)) form a disordered region. The segment covering 10–22 (DIDDDLEGVDDFG) has biased composition (acidic residues). The span at 35–57 (DSPNMNNSTAGKGSEFYNTTGSK) shows a compositional bias: polar residues. Phosphoserine is present on Ser60. Helical transmembrane passes span 131–151 (TDLYGAVWITATVVMINFTMS), 181–201 (LHSIWLFYGYTFGVPFITMQV), 220–240 (LISVYGYANLIWIPVCVILNI), 249–269 (TVQAIQWAIVALGWAQSSYFL), and 290–310 (SIIVVVALHTLFCLLFRFIIF).

The protein belongs to the YIP1 family. In terms of assembly, interacts with SNX3, TVP18, TVP23, YIP1 and YIP4. Interacts with SEC4; The C-terminal cysteines in the Rab GTPase SEC4 are essential for the interaction. Interacts with YPT1, YPT6, YPT7, YPT10, YPT11, YPT31, YPT32 and YPT52; These proteins are all Rab GTPases.

Its subcellular location is the membrane. In terms of biological role, possible role in vesicle-mediated transport. May be involved in proper membrane localization of Rab GTPases. The sequence is that of Protein YIP5 (YIP5) from Saccharomyces cerevisiae (strain ATCC 204508 / S288c) (Baker's yeast).